Reading from the N-terminus, the 785-residue chain is Pre-rRNA-processing protein TSR1 homolog (785 aa).

Positions 1–59 are disordered; sequence MSTTGHRAGVFKKPSKPHKSWKGKRTKGEITSENRGREGVKQLTRSAHSTHRTISKDAR. The segment covering 9–25 has biased composition (basic residues); it reads GVFKKPSKPHKSWKGKR. Positions 26–40 are enriched in basic and acidic residues; the sequence is TKGEITSENRGREGV. One can recognise a Bms1-type G domain in the interval 83 to 243; it reads APCLVTVVSL…LRILNETKKK (161 aa). Positions 307-426 are disordered; sequence PHPLKAHNKT…GETTASEMMF (120 aa). Over residues 376–409 the composition is skewed to acidic residues; sequence LDDEDDEDEEDSDEDMDDSDNEEVEDDSEEEEPM.

The protein belongs to the TRAFAC class translation factor GTPase superfamily. Bms1-like GTPase family. TSR1 subfamily.

It localises to the nucleus. The protein resides in the nucleolus. Functionally, required during maturation of the 40S ribosomal subunit in the nucleolus. This Caenorhabditis elegans protein is Pre-rRNA-processing protein TSR1 homolog (tag-151).